We begin with the raw amino-acid sequence, 394 residues long: NAD(P)H-quinone oxidoreductase subunit H (394 aa).

The protein belongs to the complex I 49 kDa subunit family. NDH-1 can be composed of about 15 different subunits; different subcomplexes with different compositions have been identified which probably have different functions.

The protein localises to the cellular thylakoid membrane. The catalysed reaction is a plastoquinone + NADH + (n+1) H(+)(in) = a plastoquinol + NAD(+) + n H(+)(out). The enzyme catalyses a plastoquinone + NADPH + (n+1) H(+)(in) = a plastoquinol + NADP(+) + n H(+)(out). Functionally, NDH-1 shuttles electrons from an unknown electron donor, via FMN and iron-sulfur (Fe-S) centers, to quinones in the respiratory and/or the photosynthetic chain. The immediate electron acceptor for the enzyme in this species is believed to be plastoquinone. Couples the redox reaction to proton translocation, and thus conserves the redox energy in a proton gradient. Cyanobacterial NDH-1 also plays a role in inorganic carbon-concentration. The chain is NAD(P)H-quinone oxidoreductase subunit H from Acaryochloris marina (strain MBIC 11017).